The chain runs to 1189 residues: Phosphinothricin tripeptide synthetase PhsB (1189 aa).

In terms of domain architecture, Carrier 1 spans 5–80 (QTDDVVTGRI…ALAKRIRASR (76 aa)). O-(pantetheine 4'-phosphoryl)serine is present on Ser40. 2 disordered regions span residues 75–97 (RIRA…PVDS) and 454–476 (TPDR…GGDT). The interval 100-541 (TAPLTFQQEP…VALLPLQEPA (442 aa)) is condensation. Residues 455-472 (PDRDGREPGEGPFAREES) show a composition bias toward basic and acidic residues. The segment at 572–969 (AQAHRTPDAV…GREDGQVKLR (398 aa)) is adenylation. The disordered stretch occupies residues 1045 to 1081 (DRVPLTPSGKTDRKALPDPAAGEQPRSGRGAAPGTPA). Residues 1076–1151 (APGTPAEREL…DFALAVVTAQ (76 aa)) form the Carrier 2 domain. Ser1111 carries the post-translational modification O-(pantetheine 4'-phosphoryl)serine.

This sequence belongs to the NRP synthetase family. Pantetheine 4'-phosphate serves as cofactor.

The catalysed reaction is holo-[peptidyl-carrier protein] + L-alanine + ATP = L-alanyl-[peptidyl-carrier protein] + AMP + diphosphate. It functions in the pathway secondary metabolite biosynthesis; bialaphos biosynthesis. Functionally, involved in the biosynthesis of phosphinothricin tripeptide (PTT), also known as bialaphos (BA), a natural-product antibiotic and potent herbicide. Adenylates L-alanine and loads it onto a peptidyl carrier domain via a thioester linkage to the phosphopanthetheine moiety. Shows weaker activity with aminobutyric acid and L-serine. This is Phosphinothricin tripeptide synthetase PhsB from Streptomyces viridochromogenes (strain DSM 40736 / JCM 4977 / BCRC 1201 / Tue 494).